Reading from the N-terminus, the 551-residue chain is GMP synthase [glutamine-hydrolyzing] (551 aa).

The region spanning 40–233 is the Glutamine amidotransferase type-1 domain; the sequence is KILIVDFGSQ…VRKIAGLTGD (194 aa). The Nucleophile role is filled by Cys-117. Catalysis depends on residues His-207 and Glu-209. The GMPS ATP-PPase domain maps to 234–426; it reads WTMRAFREEE…LGLPEIFVGR (193 aa). 261 to 267 provides a ligand contact to ATP; it reads SGGVDSA.

As to quaternary structure, homodimer.

The enzyme catalyses XMP + L-glutamine + ATP + H2O = GMP + L-glutamate + AMP + diphosphate + 2 H(+). The protein operates within purine metabolism; GMP biosynthesis; GMP from XMP (L-Gln route): step 1/1. Its function is as follows. Catalyzes the synthesis of GMP from XMP. In Bradyrhizobium diazoefficiens (strain JCM 10833 / BCRC 13528 / IAM 13628 / NBRC 14792 / USDA 110), this protein is GMP synthase [glutamine-hydrolyzing].